A 213-amino-acid polypeptide reads, in one-letter code: Uridine kinase (213 aa).

15–22 (GASASGKS) lines the ATP pocket.

This sequence belongs to the uridine kinase family.

The protein localises to the cytoplasm. The catalysed reaction is uridine + ATP = UMP + ADP + H(+). It carries out the reaction cytidine + ATP = CMP + ADP + H(+). The protein operates within pyrimidine metabolism; CTP biosynthesis via salvage pathway; CTP from cytidine: step 1/3. It functions in the pathway pyrimidine metabolism; UMP biosynthesis via salvage pathway; UMP from uridine: step 1/1. This Erwinia tasmaniensis (strain DSM 17950 / CFBP 7177 / CIP 109463 / NCPPB 4357 / Et1/99) protein is Uridine kinase.